Consider the following 92-residue polypeptide: uncharacterized protein (92 aa).

Helical transmembrane passes span 1–21 (MNIY…LVGL), 30–50 (ANVL…IVVI), and 62–82 (IALA…KVIG).

To M.thermoautotrophicum MTH1250.

It localises to the cell membrane. This is an uncharacterized protein from Methanocaldococcus jannaschii (strain ATCC 43067 / DSM 2661 / JAL-1 / JCM 10045 / NBRC 100440) (Methanococcus jannaschii).